Here is a 107-residue protein sequence, read N- to C-terminus: Heme-degrading monooxygenase (107 aa).

The ABM domain occupies 2-94; the sequence is IIVTNTTKIT…YILDNKIAYY (93 aa). Asn-6 contributes to the Fe cation binding site. A heme-binding site is contributed by His-76.

Belongs to the antibiotic biosynthesis monooxygenase family. Heme-degrading monooxygenase IsdG subfamily. Homodimer.

It is found in the cytoplasm. The enzyme catalyses heme b + 3 reduced [NADPH--hemoprotein reductase] + 3 O2 = biliverdin IXalpha + CO + Fe(2+) + 3 oxidized [NADPH--hemoprotein reductase] + 3 H2O + H(+). Allows bacterial pathogens to use the host heme as an iron source. Catalyzes the oxidative degradation of the heme macrocyclic porphyrin ring to the biliverdin in the presence of a suitable electron donor such as ascorbate or NADPH--cytochrome P450 reductase, with subsequent release of free iron. The protein is Heme-degrading monooxygenase of Bacillus mycoides (strain KBAB4) (Bacillus weihenstephanensis).